The sequence spans 1108 residues: Retinal guanylyl cyclase 2 (1108 aa).

Positions 1-50 (MFLGLGRFSRLVLWFAAFRKLLGHHGLASAKFLWCLCLLSVMSLPQQVWT) are cleaved as a signal peptide. Topologically, residues 51 to 467 (LPYKIGVVGP…KICHGGIDPA (417 aa)) are extracellular. A disulfide bridge connects residues C104 and C132. A helical transmembrane segment spans residues 468–490 (FAMMVCLTLLIALLSINGFAYFI). Over 491–1108 (RRRINKIQLI…AERQLVRNKP (618 aa)) the chain is Cytoplasmic. One can recognise a Protein kinase domain in the interval 532-812 (FQITSEVQSG…DEIFNQFKTF (281 aa)). The Guanylate cyclase domain occupies 884–1014 (TLYFSDIVGF…DTVNTASRME (131 aa)).

The protein belongs to the adenylyl cyclase class-4/guanylyl cyclase family. Homodimer. Interacts with RD3; promotes the exit of GUCY2F from the endoplasmic reticulum and its trafficking to the photoreceptor outer segments. In terms of processing, there are 9 conserved cysteine residues in sensory guanylate cyclases, 6 in the extracellular domain, which may be involved in intra- or interchain disulfide bonds. In terms of tissue distribution, retina. Localized exclusively in the outer nuclear layer and inner segments of the rod and cone photoreceptor cells.

The protein resides in the photoreceptor outer segment membrane. It carries out the reaction GTP = 3',5'-cyclic GMP + diphosphate. Activated by GUCA1B when free calcium ions concentration is low, and inhibited by GUCA1B when free calcium ions concentration is high. Inhibited by RD3. Its function is as follows. Responsible for the synthesis of cyclic GMP (cGMP) in rods and cones of photoreceptors. Plays an essential role in phototransduction, by mediating cGMP replenishment. May also participate in the trafficking of membrane-asociated proteins to the photoreceptor outer segment membrane. The protein is Retinal guanylyl cyclase 2 (GUCY2F) of Homo sapiens (Human).